A 164-amino-acid polypeptide reads, in one-letter code: UPF0262 protein Saro_0143 (164 aa).

This sequence belongs to the UPF0262 family.

This is UPF0262 protein Saro_0143 from Novosphingobium aromaticivorans (strain ATCC 700278 / DSM 12444 / CCUG 56034 / CIP 105152 / NBRC 16084 / F199).